Here is a 907-residue protein sequence, read N- to C-terminus: Sensor protein GacS (907 aa).

3 consecutive transmembrane segments (helical) span residues 9–25 (ASLM…WMQL), 84–101 (VLAH…IGSG), and 159–178 (LFAS…TLAV). The 53-residue stretch at 182-234 (RTINGPMSQIKQAVSQLKDGNLETRLPPLGSRELDELASGINRMAATLQNAQE) folds into the HAMP domain. A Histidine kinase domain is found at 281–502 (NMSHEIRTPL…EFWISLKLPK (222 aa)). Position 284 is a phosphohistidine; by autocatalysis (H284). One can recognise a Response regulatory domain in the interval 658-777 (RVLCVDDNPA…QLAQVVLKWT (120 aa)). Residue D707 is modified to 4-aspartylphosphate. In terms of domain architecture, HPt spans 814–907 (KADLAADMLA…RLEAEARVMA (94 aa)). Residue H853 is modified to Phosphohistidine.

In terms of processing, activation requires a sequential transfer of a phosphate group from a His in the primary transmitter domain, to an Asp in the receiver domain and to a His in the secondary transmitter domain.

The protein resides in the cell inner membrane. The enzyme catalyses ATP + protein L-histidine = ADP + protein N-phospho-L-histidine.. Forms part of a two-component regulatory system GacA/GacS(LemA). May be involved in lesion formation, swarming and in the production of extracellular protease, syringomycin and N-acyl-L-homoserine lactone (acyl-HSL). Required for pathogenicity on bean. The protein is Sensor protein GacS (gacS) of Pseudomonas syringae pv. syringae.